A 488-amino-acid polypeptide reads, in one-letter code: Protein nucleotidyltransferase YdiU (488 aa).

ATP-binding residues include glycine 91, glycine 93, arginine 94, lysine 114, aspartate 126, glycine 127, arginine 177, and arginine 184. Aspartate 253 (proton acceptor) is an active-site residue. Positions 254 and 263 each coordinate Mg(2+). Position 263 (aspartate 263) interacts with ATP.

Belongs to the SELO family. Mg(2+) serves as cofactor. Mn(2+) is required as a cofactor.

The enzyme catalyses L-seryl-[protein] + ATP = 3-O-(5'-adenylyl)-L-seryl-[protein] + diphosphate. It catalyses the reaction L-threonyl-[protein] + ATP = 3-O-(5'-adenylyl)-L-threonyl-[protein] + diphosphate. The catalysed reaction is L-tyrosyl-[protein] + ATP = O-(5'-adenylyl)-L-tyrosyl-[protein] + diphosphate. It carries out the reaction L-histidyl-[protein] + UTP = N(tele)-(5'-uridylyl)-L-histidyl-[protein] + diphosphate. The enzyme catalyses L-seryl-[protein] + UTP = O-(5'-uridylyl)-L-seryl-[protein] + diphosphate. It catalyses the reaction L-tyrosyl-[protein] + UTP = O-(5'-uridylyl)-L-tyrosyl-[protein] + diphosphate. Nucleotidyltransferase involved in the post-translational modification of proteins. It can catalyze the addition of adenosine monophosphate (AMP) or uridine monophosphate (UMP) to a protein, resulting in modifications known as AMPylation and UMPylation. The protein is Protein nucleotidyltransferase YdiU of Bacillus thuringiensis (strain Al Hakam).